We begin with the raw amino-acid sequence, 348 residues long: UDP-3-O-acylglucosamine N-acyltransferase (348 aa).

His241 serves as the catalytic Proton acceptor.

This sequence belongs to the transferase hexapeptide repeat family. LpxD subfamily. In terms of assembly, homotrimer.

It carries out the reaction a UDP-3-O-[(3R)-3-hydroxyacyl]-alpha-D-glucosamine + a (3R)-hydroxyacyl-[ACP] = a UDP-2-N,3-O-bis[(3R)-3-hydroxyacyl]-alpha-D-glucosamine + holo-[ACP] + H(+). Its pathway is bacterial outer membrane biogenesis; LPS lipid A biosynthesis. Functionally, catalyzes the N-acylation of UDP-3-O-acylglucosamine using 3-hydroxyacyl-ACP as the acyl donor. Is involved in the biosynthesis of lipid A, a phosphorylated glycolipid that anchors the lipopolysaccharide to the outer membrane of the cell. This is UDP-3-O-acylglucosamine N-acyltransferase from Neisseria meningitidis serogroup B (strain ATCC BAA-335 / MC58).